A 117-amino-acid chain; its full sequence is NADH-ubiquinone oxidoreductase chain 3 (117 aa).

3 consecutive transmembrane segments (helical) span residues 6–26, 58–78, and 85–105; these read ILILLIISGTLSILILGASYI, FFLIGILFLIFDLEISFLFPW, and LPLFGYWVVMLFLFILTLGLI.

It belongs to the complex I subunit 3 family.

The protein resides in the mitochondrion membrane. It carries out the reaction a ubiquinone + NADH + 5 H(+)(in) = a ubiquinol + NAD(+) + 4 H(+)(out). Its function is as follows. Core subunit of the mitochondrial membrane respiratory chain NADH dehydrogenase (Complex I) that is believed to belong to the minimal assembly required for catalysis. Complex I functions in the transfer of electrons from NADH to the respiratory chain. The immediate electron acceptor for the enzyme is believed to be ubiquinone. The chain is NADH-ubiquinone oxidoreductase chain 3 (ND3) from Sarcophyton glaucum (Toadstool umbrella leather coral).